The following is a 422-amino-acid chain: G-protein coupled receptor 83 (422 aa).

The signal sequence occupies residues 1-17 (MNVPPVLLLFLLSSVRA). The Extracellular segment spans residues 18 to 70 (TEQPQVVTEHPSMDAALTGANASHFWANYTFSDWQNFVGRRRYGAESQNPTVK). Residues 71-91 (ALLIVAYSFIIVFSLFGNVLV) form a helical membrane-spanning segment. Residues 92–106 (CHVIFKNQRMHSATS) lie on the Cytoplasmic side of the membrane. Residues 107-127 (LFIVNLAVADIMITLLNTPFT) traverse the membrane as a helical segment. Residues 128-143 (LVRFVNSTWVFGKGMC) lie on the Extracellular side of the membrane. Cys143 and Cys223 are oxidised to a cystine. A helical transmembrane segment spans residues 144 to 166 (HVSRFAQYCSLHVSALTLTAIAV). The Cytoplasmic segment spans residues 167-184 (DRHQVIMHPLKPRISITK). Residues 185 to 205 (GVIYIAVIWVMATFFSLPHAI) form a helical membrane-spanning segment. Topologically, residues 206–236 (CQKLFTFKYSEDIVRSLCLPDFPEPADLFWK) are extracellular. A helical transmembrane segment spans residues 237–257 (YLDLATFILLYLLPLFIISVA). Residues 258–292 (YARVAKKLWLCNTIGDVTTEQYLALRRKKKTTVKM) lie on the Cytoplasmic side of the membrane. Residues 293–313 (LVLVVVLFALCWFPLNCYVLL) form a helical membrane-spanning segment. Residues 314–326 (LSSKAIHTNNALY) are Extracellular-facing. A helical membrane pass occupies residues 327 to 347 (FAFHWFAMSSTCYNPFIYCWL). Over 348–422 (NENFRVELKA…SSVEPTVAVS (75 aa)) the chain is Cytoplasmic. The tract at residues 401-422 (PSSQIQSGKTDLSSVEPTVAVS) is disordered.

It belongs to the G-protein coupled receptor 1 family. Expressed preferentially in brain, and its neuronal expression is relegated to limbic brain regions, particularly in forebrain.

The protein localises to the cell membrane. In terms of biological role, G-protein coupled receptor for PEN, a neuropeptide produced from the precursor protein, proSAAS (encoded by PCSK1N). Acts through a G(i)- and G(q)-alpha-alpha-mediated pathway in response to PEN. Plays a role in food intake and body weight regulation. May contribute to the regulation of anxiety-related behaviors. This chain is G-protein coupled receptor 83, found in Rattus norvegicus (Rat).